Consider the following 908-residue polypeptide: Alanine--tRNA ligase (908 aa).

Positions 588, 592, 691, and 695 each coordinate Zn(2+).

Belongs to the class-II aminoacyl-tRNA synthetase family. Zn(2+) is required as a cofactor.

Its subcellular location is the cytoplasm. It carries out the reaction tRNA(Ala) + L-alanine + ATP = L-alanyl-tRNA(Ala) + AMP + diphosphate. Functionally, catalyzes the attachment of alanine to tRNA(Ala) in a two-step reaction: alanine is first activated by ATP to form Ala-AMP and then transferred to the acceptor end of tRNA(Ala). Also edits incorrectly charged Ser-tRNA(Ala) and Gly-tRNA(Ala) via its editing domain. This Mycobacterium leprae (strain TN) protein is Alanine--tRNA ligase.